The sequence spans 319 residues: Acetyl-coenzyme A carboxylase carboxyl transferase subunit beta, chloroplastic (319 aa).

The CoA carboxyltransferase N-terminal domain maps to 47 to 319 (LWVQCDNCES…ELFYVLQSSS (273 aa)). Zn(2+) contacts are provided by C51, C54, C70, and C73. The C4-type zinc finger occupies 51–73 (CDNCESLLYIRFLRENKSVCEEC).

The protein belongs to the AccD/PCCB family. As to quaternary structure, acetyl-CoA carboxylase is a heterohexamer composed of biotin carboxyl carrier protein, biotin carboxylase and 2 subunits each of ACCase subunit alpha and ACCase plastid-coded subunit beta (accD). Zn(2+) is required as a cofactor.

It localises to the plastid. Its subcellular location is the chloroplast stroma. The catalysed reaction is N(6)-carboxybiotinyl-L-lysyl-[protein] + acetyl-CoA = N(6)-biotinyl-L-lysyl-[protein] + malonyl-CoA. It functions in the pathway lipid metabolism; malonyl-CoA biosynthesis; malonyl-CoA from acetyl-CoA: step 1/1. Functionally, component of the acetyl coenzyme A carboxylase (ACC) complex. Biotin carboxylase (BC) catalyzes the carboxylation of biotin on its carrier protein (BCCP) and then the CO(2) group is transferred by the transcarboxylase to acetyl-CoA to form malonyl-CoA. This Picea abies (Norway spruce) protein is Acetyl-coenzyme A carboxylase carboxyl transferase subunit beta, chloroplastic.